A 1088-amino-acid chain; its full sequence is Ran-binding protein 17 (1088 aa).

A2 bears the N-acetylalanine mark. The residue at position 569 (S569) is a Phosphoserine.

It belongs to the exportin family. As to quaternary structure, binds to nucleoporins and the GTP-bound form of Ran. As to expression, highly expressed in primary spermatocytes and very weakly in pancreas.

The protein localises to the cytoplasm. It is found in the nucleus. It localises to the nuclear pore complex. Its function is as follows. May function as a nuclear transport receptor. This chain is Ran-binding protein 17 (Ranbp17), found in Mus musculus (Mouse).